Here is a 545-residue protein sequence, read N- to C-terminus: MFKPQHMYDREFGTGNGYSNGNGYTNGNGHTNGNGNYNGNGHVNGNGKANGAKVVKMKPMDSELLREQGHIMVDFIADYYKNLQDSPQDFPVLSQVQPGYLRDMLPDSAPERPESLKELLDDVSKKIMPGITHWQSPSYFAYYASSTSVAGFLGEMLNAGLSVVGFTWLTSPAATELEIIVLDWLAKLLQLPDHFLSTGNGGGVIQGTGCEAVLVVVLAARDRILKKVGKTLLPQLVVYGSDQTHSSFRKACLIGGIHEENIRLLKTDSSTNYGMPPESLEEAISHDLAKGFIPFFICATVGTTSSAAVDPLVPLGNIAKKYGIWLHVDAAYAGNACICPEYRKFIDGIENADSFNMNAHKWLFANQTCSPLWVKDRYSLIDALKTNPEYLEFKVSKKDTVVNYKDWQISLSRRFRSLKLWMVLRLYGSENLRNFIRDHVNLAKHFEDYVAQDPSFEVVTTRYFSLVCFRLAPVDGDEDQCNERNRELLAAVNSTGKIFISHTALSGKFVLRFAVGAPLTEEKHVTEAWQIIQKHASKFTRNDHY.

Residues 23–44 show a composition bias toward gly residues; that stretch reads GYTNGNGHTNGNGNYNGNGHVN. Residues 23-45 form a disordered region; sequence GYTNGNGHTNGNGNYNGNGHVNG. Residues histidine 245 and histidine 360 each coordinate L-tyrosine. Lysine 361 carries the N6-(pyridoxal phosphate)lysine modification. Tyrosine 390 contributes to the L-tyrosine binding site.

This sequence belongs to the group II decarboxylase family. Homotetramer. It depends on pyridoxal 5'-phosphate as a cofactor. As to expression, expressed specifically in flowers.

Its subcellular location is the cytoplasm. The catalysed reaction is L-tyrosine + H(+) = tyramine + CO2. Its function is as follows. Converts tyrosine into tyramine, a precursor of isoquinoline alkaloids and various amides. The sequence is that of Tyrosine decarboxylase 2 from Arabidopsis thaliana (Mouse-ear cress).